A 314-amino-acid chain; its full sequence is Homoserine O-succinyltransferase (314 aa).

Cys142 serves as the catalytic Acyl-thioester intermediate. Substrate is bound by residues Lys163 and Ser192. His235 acts as the Proton acceptor in catalysis. Glu237 is an active-site residue. Position 249 (Arg249) interacts with substrate.

This sequence belongs to the MetA family.

Its subcellular location is the cytoplasm. The enzyme catalyses L-homoserine + succinyl-CoA = O-succinyl-L-homoserine + CoA. The protein operates within amino-acid biosynthesis; L-methionine biosynthesis via de novo pathway; O-succinyl-L-homoserine from L-homoserine: step 1/1. Transfers a succinyl group from succinyl-CoA to L-homoserine, forming succinyl-L-homoserine. The polypeptide is Homoserine O-succinyltransferase (Shewanella frigidimarina (strain NCIMB 400)).